Consider the following 954-residue polypeptide: Protein teashirt (954 aa).

Disordered regions lie at residues 20 to 91, 167 to 207, and 276 to 331; these read LPTA…SLPS, ESAE…PQLG, and VKGG…GSGA. A compositionally biased stretch (gly residues) spans 47-57; sequence HGGGAGSGGVG. The span at 292-303 shows a compositional bias: polar residues; the sequence is SKATTPQAASQP. Gly residues predominate over residues 318–328; it reads SGGGSGGGAAG. Residues 354-378 form a C2H2-type 1 zinc finger; the sequence is FRCVWCKQSFPTLEALTTHMKDSKH. Residues 383 to 444 form a disordered region; sequence VPPFGNLPSN…YRGDPPTPLP (62 aa). The segment covering 417-428 has biased composition (low complexity); sequence SGSASNHSPSAN. 2 C2H2-type zinc fingers span residues 466-490 and 533-557; these read LKCM…ETQH and LTCK…KNNH. Disordered stretches follow at residues 563-622, 689-714, and 748-935; these read LQSA…DKND, FDTP…TSPV, and TSSE…NLTA. A compositionally biased stretch (basic residues) spans 568–578; it reads ARKRPAPKKRE. Basic and acidic residues predominate over residues 579 to 588; it reads KSLPVRKLLE. Over residues 696-712 the composition is skewed to low complexity; that stretch reads ASLPASSPSNSSTKNTS. 2 positions are modified to phosphoserine: Ser750 and Ser758. A compositionally biased stretch (basic and acidic residues) spans 778-807; the sequence is GHDEESSKPAIKQEREAESKPVKMEIKSEF. Residues 842 to 851 show a composition bias toward low complexity; it reads PKTPSSAASP. 2 stretches are compositionally biased toward polar residues: residues 862–885 and 893–907; these read AESQ…GSSE and DSLN…SLGS. Residues 910–926 show a composition bias toward low complexity; that stretch reads AGANSRAKLAAAAAAGG.

The protein belongs to the teashirt C2H2-type zinc-finger protein family. As to quaternary structure, binds arm. Shows a dynamic expression pattern during embryogenesis. Expressed in the embryonic trunk region (PS 3-13) with expression strongest in the thoracic segments. Expressed in a small group of cells corresponding to the anal tuft from stage 14. Strongly expressed in the embryonic ventral nerve cord. Also expressed in the proximal domain of the leg imaginal disk and in the region of the wing disk that will give rise to the proximal wing hinge. Expressed at high levels in the anterior and central embryonic midgut mesoderm and in the embryonic midgut endoderm. Expressed at a low level in more posterior visceral mesoderm of the gut. From stage 12 onwards, tsh and tio are colocalized in some cells of the CNS, trunk epidermis, hindgut and Malpighian tubules.

Its subcellular location is the nucleus. It is found in the cytoplasm. Homeotic protein that acts downstream of Arm in the Wg cascade during embryogenesis to determine segment identity throughout the entire trunk. Acts cooperatively with other trunk homeotic proteins to repress head homeotic genes and therefore repress head segmental identity. Necessary, in combination with Scr, for the formation of the prothoracic segment. Promotes eye development in the dorsal region of the eye disk and suppresses eye development in the ventral region in combination with Wg-signaling and several early dorso-ventral eye patterning genes. Required for proper development of proximal leg segments. Has differential functions along the dorso-ventral axs of the antennal and leg disks. May play a role in wing hinge development. Possible involvement in chromatin structure for modulation of transcription. Binds DNA and can act as both a transcriptional repressor and activator. Positively regulates its own expression as well as that of Dll. Negatively regulates the expression of mod. Required for Wg-mediated transcriptional repression of Ubx in the midgut. Also represses transcription of lab in the midgut and is necessary for the proper formation of anterior and central midgut structures. Tiptop (tio) and teashirt (tsh) have, on the whole, common activities. Tio and tsh repress each other's expression and tsh has a crucial role for trunk patterning that is in part masked by ectopic expression of tiptop. Both genes share a common activity required for the activation of Ser and svb and the maintenance of en and wg. In Drosophila melanogaster (Fruit fly), this protein is Protein teashirt (tsh).